The primary structure comprises 266 residues: 3-deoxy-manno-octulosonate cytidylyltransferase 1 (266 aa).

Belongs to the KdsB family.

Its subcellular location is the cytoplasm. It catalyses the reaction 3-deoxy-alpha-D-manno-oct-2-ulosonate + CTP = CMP-3-deoxy-beta-D-manno-octulosonate + diphosphate. It participates in nucleotide-sugar biosynthesis; CMP-3-deoxy-D-manno-octulosonate biosynthesis; CMP-3-deoxy-D-manno-octulosonate from 3-deoxy-D-manno-octulosonate and CTP: step 1/1. Its pathway is bacterial outer membrane biogenesis; lipopolysaccharide biosynthesis. Its function is as follows. Activates KDO (a required 8-carbon sugar) for incorporation into bacterial lipopolysaccharide in Gram-negative bacteria. The chain is 3-deoxy-manno-octulosonate cytidylyltransferase 1 from Paraburkholderia phytofirmans (strain DSM 17436 / LMG 22146 / PsJN) (Burkholderia phytofirmans).